Consider the following 514-residue polypeptide: 1-pyrroline-5-carboxylate dehydrogenase (514 aa).

Residues glutamate 286 and cysteine 320 contribute to the active site.

It belongs to the aldehyde dehydrogenase family. RocA subfamily.

The catalysed reaction is L-glutamate 5-semialdehyde + NAD(+) + H2O = L-glutamate + NADH + 2 H(+). Its pathway is amino-acid degradation; L-proline degradation into L-glutamate; L-glutamate from L-proline: step 2/2. The chain is 1-pyrroline-5-carboxylate dehydrogenase from Staphylococcus aureus (strain MRSA252).